Reading from the N-terminus, the 151-residue chain is Transcriptional repressor NrdR (151 aa).

A disordered region spans residues 1–24 (MRCPKCQHNGTRVLDSRPSDESRS). A zinc finger spans residues 3 to 34 (CPKCQHNGTRVLDSRPSDESRSIKRRRECEKC). Residues 14 to 24 (LDSRPSDESRS) show a composition bias toward basic and acidic residues. An ATP-cone domain is found at 49-139 (LLIIKKDGMR…VYRQFKDINV (91 aa)).

The protein belongs to the NrdR family. It depends on Zn(2+) as a cofactor.

In terms of biological role, negatively regulates transcription of bacterial ribonucleotide reductase nrd genes and operons by binding to NrdR-boxes. The protein is Transcriptional repressor NrdR of Shouchella clausii (strain KSM-K16) (Alkalihalobacillus clausii).